The sequence spans 475 residues: TOM1-like protein 1 (475 aa).

The region spanning 22 to 154 (ATFAGVQTED…DLLKKGVQFP (133 aa)) is the VHS domain. The segment at 155-175 (PLDGEPETKQEAGQISPSRPT) is disordered. The segment covering 165 to 175 (EAGQISPSRPT) has biased composition (polar residues). At S170 the chain carries Phosphoserine. Residues 199-287 (EQIGKLHSEL…AILGYERFTR (89 aa)) form the GAT domain. Residues 296–317 (KRNPTEANQTSSEPSAPSCDLL) are disordered. Over residues 300-310 (TEANQTSSEPS) the composition is skewed to polar residues. The residue at position 313 (S313) is a Phosphoserine. Positions 392–395 (YDNF) are interaction with GRB2. Positions 421–425 (LPPLP) match the SH3-binding motif. The interval 442–445 (YEVM) is interaction with PIK3R1. Y458 carries the post-translational modification Phosphotyrosine. The short motif at 458–461 (YEEI) is the SH2-binding element.

This sequence belongs to the TOM1 family. In terms of assembly, interacts with the SH2 and SH3 domains of FYN when phosphorylated. Also interacts with GRB2 and PIK3R1 when phosphorylated. Interacts with LYN. Phosphorylated on tyrosines by FYN and LYN.

It localises to the golgi apparatus. The protein localises to the golgi stack. It is found in the endosome membrane. The protein resides in the cytoplasm. Its subcellular location is the membrane. Functionally, probable adapter protein involved in signaling pathways. Interacts with the SH2 and SH3 domains of various signaling proteins when it is phosphorylated. May promote FYN activation, possibly by disrupting intramolecular SH3-dependent interactions. This chain is TOM1-like protein 1 (Tom1l1), found in Rattus norvegicus (Rat).